Here is a 153-residue protein sequence, read N- to C-terminus: Iron-sulfur cluster assembly scaffold protein IscU 1 (153 aa).

The [2Fe-2S] cluster site is built by Cys-33, Cys-58, His-101, and Cys-102.

It belongs to the NifU family. Forms a heterotetramer with IscS2.

In terms of biological role, a scaffold on which IscS assembles Fe-S clusters. Subsequently gives the nascent cluster to other proteins. It is likely that Fe-S cluster coordination is flexible as the role of this complex is to build and then hand off Fe-S clusters. The chain is Iron-sulfur cluster assembly scaffold protein IscU 1 (iscU1) from Archaeoglobus fulgidus (strain ATCC 49558 / DSM 4304 / JCM 9628 / NBRC 100126 / VC-16).